The primary structure comprises 179 residues: Peptidyl-tRNA hydrolase 2, mitochondrial (179 aa).

The chain crosses the membrane as a helical span at residues 15-37 (STLGLAVGVACGMCLGWSLRVCF). Glycyl lysine isopeptide (Lys-Gly) (interchain with G-Cter in ubiquitin) cross-links involve residues lysine 47, lysine 76, lysine 81, lysine 95, lysine 106, lysine 115, lysine 171, and lysine 177.

Belongs to the PTH2 family. Monomer. Post-translationally, ubiquitinated by PRKN during mitophagy, leading to its degradation and enhancement of mitophagy. Deubiquitinated by USP30.

It localises to the mitochondrion outer membrane. It catalyses the reaction an N-acyl-L-alpha-aminoacyl-tRNA + H2O = an N-acyl-L-amino acid + a tRNA + H(+). Peptidyl-tRNA hydrolase which releases tRNAs from the ribosome during protein synthesis. Promotes caspase-independent apoptosis by regulating the function of two transcriptional regulators, AES and TLE1. The sequence is that of Peptidyl-tRNA hydrolase 2, mitochondrial (PTRH2) from Homo sapiens (Human).